Reading from the N-terminus, the 681-residue chain is Transketolase 2 (681 aa).

Position 30 (histidine 30) interacts with substrate. Thiamine diphosphate is bound by residues histidine 69 and 116–118 (GPL). Aspartate 157 serves as a coordination point for Mg(2+). Thiamine diphosphate is bound by residues glycine 158 and asparagine 187. Mg(2+)-binding residues include asparagine 187 and isoleucine 189. Histidine 263, arginine 359, and serine 386 together coordinate substrate. Position 263 (histidine 263) interacts with thiamine diphosphate. Residues glutamate 418 and phenylalanine 445 each coordinate thiamine diphosphate. The active-site Proton donor is glutamate 418. Substrate contacts are provided by histidine 469, aspartate 477, and arginine 528.

This sequence belongs to the transketolase family. In terms of assembly, homodimer. It depends on Mg(2+) as a cofactor. Requires Ca(2+) as cofactor. Mn(2+) serves as cofactor. The cofactor is Co(2+). Thiamine diphosphate is required as a cofactor.

The enzyme catalyses D-sedoheptulose 7-phosphate + D-glyceraldehyde 3-phosphate = aldehydo-D-ribose 5-phosphate + D-xylulose 5-phosphate. Catalyzes the transfer of a two-carbon ketol group from a ketose donor to an aldose acceptor, via a covalent intermediate with the cofactor thiamine pyrophosphate. This is Transketolase 2 (TKL2) from Saccharomyces cerevisiae (strain ATCC 204508 / S288c) (Baker's yeast).